A 156-amino-acid polypeptide reads, in one-letter code: Phytohormone-binding protein (156 aa).

Gibberellin A3 is bound by residues Q22, Q68, and T141.

This sequence belongs to the BetVI family.

Binds gibberellin A3 (GA3) in vitro. The protein is Phytohormone-binding protein of Medicago truncatula (Barrel medic).